The chain runs to 348 residues: Protein-arginine N-acetylglucosaminyltransferase SseK2 (348 aa).

UDP-N-acetyl-alpha-D-glucosamine is bound by residues 64–66, Tyr88, and 237–240; these read QWF and YLDA. The short motif at 239–241 is the DXD motif element; that stretch reads DAD. Asp241 lines the Mn(2+) pocket. Glu271 functions as the Proton acceptor in the catalytic mechanism. Residues Asn338, Ser340, and 345–348 each bind UDP-N-acetyl-alpha-D-glucosamine; that span reads SSWR. Positions 338 and 340 each coordinate Mn(2+).

It belongs to the glycosyltransferase NleB family. The cofactor is Mn(2+).

The protein localises to the secreted. It is found in the host Golgi apparatus. The catalysed reaction is L-arginyl-[protein] + UDP-N-acetyl-alpha-D-glucosamine = N(omega)-(N-acetyl-beta-D-glucosaminyl)-L-arginyl-[protein] + UDP + H(+). Protein-arginine N-acetylglucosaminyltransferase activity is inhibited by 100066N compound (flavone analog) and 102644N compound (a substituted isoxazole). Its function is as follows. Protein-arginine N-acetylglucosaminyltransferase effector that catalyzes the transfer of a single N-acetylglucosamine (GlcNAc) to a conserved arginine residue in the death domain of host proteins such as FADD: arginine GlcNAcylation prevents homotypic/heterotypic death domain interactions. Also acts on host proteins without a death domain: catalyzes arginine GlcNAcylation of host small Rab1 GTPase, thereby preventing GTPase activity and leading to impaired host vesicular protein transport. In contrast to Ssek1, not able to disrupt TNF signaling in infected cells. The polypeptide is Protein-arginine N-acetylglucosaminyltransferase SseK2 (Salmonella typhimurium (strain SL1344)).